A 22-amino-acid polypeptide reads, in one-letter code: Mu-conotoxin KIIIB (22 aa).

The propeptide occupies 1–2 (KR). 7 cysteine pairs are disulfide-bonded: Cys-5–Cys-13, Cys-5–Cys-19, Cys-5–Cys-20, Cys-6–Cys-13, Cys-6–Cys-19, Cys-8–Cys-19, and Cys-8–Cys-20. 2 pharmacophore key residues regions span residues 14–16 (RDH) and 18–19 (RC). Cys-20 carries the post-translational modification Cysteine amide.

The protein belongs to the conotoxin M superfamily. In terms of assembly, monomer. Post-translationally, toxins with three different disulfide connectivities have been synthesized. The conotoxin mu-KIIIA-P1 shows the connectivity C1-C5, C2-C4, and C3-C6, whereas mu-KIIIA-P2 shows the connectivity C1-C6, C2-C4, and C3-C5. The conotoxin mu-KIIIA-N has the 'native' fold of the mu-conotoxin family (C1-C4, C2-C5, and C3-C6). Mu-KIIIA-P1 and mu-KIIIA-P2 are obtained by both thermodynamic oxidative folding and regioselective synthesis. Mu-KIIIA-P1 is the major oxidative folding product. Mu-KIIIA-N is only obtained by regioselective synthesis. Expressed by the venom duct.

The protein resides in the secreted. In terms of biological role, mu-conotoxin KIIIA-P1: mu-conotoxins block voltage-gated sodium channels (Nav). This toxin potently blocks Nav1.2/SCN2A (IC(50)5-124 nM), Nav1.4/SCN4A (IC(50)=20-90 nM), and Nav1.7/SCN9A (IC(50)=290-413 nM). It moderately blocks Nav1.1/SCN1A, and mNav1.6/SCN8A. It also shows a very low activity on Nav1.3/SCN3A. This toxin binds a microsite within the pore different from the tetrodotoxin binding site 1 (tested on Nav1.2). The block is partial, with a residual current that can be completely blocked by TTX. The toxin probably docks at a more superficial site in the outer vestibule of the channel than does TTX. On rNav1.2/SCN2A, it produces a block that is only partially reversible. The block of Nav1.7 is modified when beta-subunits are coexpressed with the alpha subunit. Hence, blocks of channels containing beta-1 and beta-3 subunits are more potent (compared to channels without beta subunits), whereas blocks of channels containing beta-2 and beta-4 subunits are less potent (compared to channels without beta subunits). Functionally, mu-conotoxin KIIIA-P2: This toxin potently blocks Nav1.2/SCN2A (Kd=230 nM, IC(50)=1.37 uM) and Nav1.4/SCN4A (Kd=830 nM, IC(50)=2 uM). It also moderately blocks Nav1.7/SCN9A (Kd=1.57 uM, IC(50)=5.4 uM). In addition, this toxin may also inhibit other sodium channels, as does Mu-conotoxin KIIIA-P1. Its function is as follows. Mu-conotoxin KIIIA-N: This toxin moderately blocks Nav1.2/SCN2A (IC(50)=875 nM), Nav1.4/SCN4A (IC(50)=472 nM), and Nav1.7/SCN9A (IC(50)=887 nM). Mu-conotoxin KIIIB-P1: This toxin potently blocks Nav1.2/SCN2A (Kd=470 nM). In addition, this toxin may also inhibit other sodium channels, as does Mu-conotoxin KIIIA-P1. In terms of biological role, mu-conotoxin KIIIB-P2: This toxin potently blocks Nav1.2/SCN2A (Kd=26 nM). In addition, this toxin may also inhibit other sodium channels, as does Mu-conotoxin KIIIA-P1. The protein is Mu-conotoxin KIIIB of Conus kinoshitai (Kinoshita's cone).